The following is a 267-amino-acid chain: Taurine import ATP-binding protein TauB (267 aa).

Positions 6–238 (FNEASLIYPA…DILAGAPASE (233 aa)) constitute an ABC transporter domain. Residue 43–50 (GRSGSGKT) coordinates ATP.

It belongs to the ABC transporter superfamily. Taurine importer (TC 3.A.1.17.1) family. In terms of assembly, the complex is composed of two ATP-binding proteins (TauB), two transmembrane proteins (TauC) and a solute-binding protein (TauA).

The protein localises to the cell inner membrane. It carries out the reaction taurine(out) + ATP + H2O = taurine(in) + ADP + phosphate + H(+). In terms of biological role, part of the ABC transporter complex TauABC involved in taurine import. Responsible for energy coupling to the transport system. This is Taurine import ATP-binding protein TauB from Sinorhizobium fredii (strain NBRC 101917 / NGR234).